The primary structure comprises 635 residues: Threonine--tRNA ligase (635 aa).

In terms of domain architecture, TGS spans 1 to 61 (MVSIRLPDGS…DRDASLAIVT (61 aa)). The catalytic stretch occupies residues 242-533 (DHRKLGKQLD…LIEHHAGAMP (292 aa)). The Zn(2+) site is built by Cys-333, His-384, and His-510.

It belongs to the class-II aminoacyl-tRNA synthetase family. In terms of assembly, homodimer. The cofactor is Zn(2+).

The protein localises to the cytoplasm. It carries out the reaction tRNA(Thr) + L-threonine + ATP = L-threonyl-tRNA(Thr) + AMP + diphosphate + H(+). In terms of biological role, catalyzes the attachment of threonine to tRNA(Thr) in a two-step reaction: L-threonine is first activated by ATP to form Thr-AMP and then transferred to the acceptor end of tRNA(Thr). Also edits incorrectly charged L-seryl-tRNA(Thr). This Burkholderia orbicola (strain MC0-3) protein is Threonine--tRNA ligase.